A 661-amino-acid polypeptide reads, in one-letter code: Arginine--tRNA ligase, cytoplasmic (661 aa).

Methionine 1 carries the post-translational modification N-acetylmethionine. Residues 1-73 (MDGLVAQCSA…AEKRRRPTKN (73 aa)) form a could be involved in the assembly of the multisynthetase complex region. L-arginine contacts are provided by residues 201-203 (SPN), histidine 212, tyrosine 385, aspartate 389, and glutamine 413. A 'HIGH' region motif is present at residues 202 to 213 (PNIAKEMHVGHL). Positions 530–544 (NTAAYLLYAFTRIRS) are interaction with tRNA.

The protein belongs to the class-I aminoacyl-tRNA synthetase family. Interacts (via N-terminus) with AIMP1 (via N-terminus); this stimulates its catalytic activity. Interacts (via N-terminus) with LARS2 (via C-terminus). Monomer. Part of a multisubunit complex that groups tRNA ligases for Arg (RARS1), Asp (DARS1), Gln (QARS1), Ile (IARS1), Leu (LARS1), Lys (KARS1), Met (MARS1) the bifunctional ligase for Glu and Pro (EPRS1) and the auxiliary subunits AIMP1/p43, AIMP2/p38 and EEF1E1/p18. Interacts with QARS1. Part of a complex composed of RARS1, QARS1 and AIMP1.

It is found in the cytoplasm. The protein localises to the cytosol. It carries out the reaction tRNA(Arg) + L-arginine + ATP = L-arginyl-tRNA(Arg) + AMP + diphosphate. In terms of biological role, forms part of a macromolecular complex that catalyzes the attachment of specific amino acids to cognate tRNAs during protein synthesis. Modulates the secretion of AIMP1 and may be involved in generation of the inflammatory cytokine EMAP2 from AIMP1. The protein is Arginine--tRNA ligase, cytoplasmic (RARS1) of Cricetulus griseus (Chinese hamster).